Here is a 341-residue protein sequence, read N- to C-terminus: tRNA N6-adenosine threonylcarbamoyltransferase (341 aa).

Fe cation is bound by residues His114 and His118. Residues 136 to 140, Asp169, Gly182, Asp186, and Asn278 contribute to the substrate site; that span reads LVSGG. Asp304 contacts Fe cation.

Belongs to the KAE1 / TsaD family. The cofactor is Fe(2+).

It localises to the cytoplasm. It catalyses the reaction L-threonylcarbamoyladenylate + adenosine(37) in tRNA = N(6)-L-threonylcarbamoyladenosine(37) in tRNA + AMP + H(+). Functionally, required for the formation of a threonylcarbamoyl group on adenosine at position 37 (t(6)A37) in tRNAs that read codons beginning with adenine. Is involved in the transfer of the threonylcarbamoyl moiety of threonylcarbamoyl-AMP (TC-AMP) to the N6 group of A37, together with TsaE and TsaB. TsaD likely plays a direct catalytic role in this reaction. In Lactococcus lactis subsp. cremoris (strain MG1363), this protein is tRNA N6-adenosine threonylcarbamoyltransferase.